A 179-amino-acid polypeptide reads, in one-letter code: ADP-ribosylation factor-like protein 5A (179 aa).

G2 is lipidated: N-myristoyl glycine. Residues 23-30 (GLDNAGKT), 66-70 (DIGGQ), 125-128 (NKQD), and A159 contribute to the GTP site.

It belongs to the small GTPase superfamily. Arf family.

Lacks ADP-ribosylation enhancing activity. This is ADP-ribosylation factor-like protein 5A (Arl5a) from Mus musculus (Mouse).